A 376-amino-acid polypeptide reads, in one-letter code: Histidinol-phosphate aminotransferase (376 aa).

Residue Lys230 is modified to N6-(pyridoxal phosphate)lysine.

The protein belongs to the class-II pyridoxal-phosphate-dependent aminotransferase family. Histidinol-phosphate aminotransferase subfamily. In terms of assembly, homodimer. The cofactor is pyridoxal 5'-phosphate.

It carries out the reaction L-histidinol phosphate + 2-oxoglutarate = 3-(imidazol-4-yl)-2-oxopropyl phosphate + L-glutamate. It participates in amino-acid biosynthesis; L-histidine biosynthesis; L-histidine from 5-phospho-alpha-D-ribose 1-diphosphate: step 7/9. This chain is Histidinol-phosphate aminotransferase, found in Trichodesmium erythraeum (strain IMS101).